The chain runs to 72 residues: Mitochondrial import protein 2 (72 aa).

The disordered stretch occupies residues 1–22; that stretch reads MAEVLDLEIDPISDGEDDTYSS. The Cytoplasmic portion of the chain corresponds to 1–34; sequence MAEVLDLEIDPISDGEDDTYSSELDDDLKDSIEQ. The chain crosses the membrane as a helical span at residues 35-52; the sequence is LERVLCLVVFPLLGKFLG. Residues 53-72 are Mitochondrial intermembrane-facing; that stretch reads RKFAFHAWARWLERRRLVSN.

The protein belongs to the MIM2 family. In terms of assembly, component of the mitochondrial outer import machinery (MIM) complex containing at least mim1 and mim2. Interacts with mim1. Interacts with mitophagy receptor atg43.

The protein localises to the mitochondrion outer membrane. In terms of biological role, component of the mitochondrial outer import machinery (MIM) complex that mediates transport of proteins into mitochondrial compartments. Promotes the insertion of tom70 into the outer mitochondrial membrane. Promotes the insertion of atg43 into the outer mitochondrial membrane. Involved in import of the subset of proteins with multiple alpha-helical transmembrane segments. This is Mitochondrial import protein 2 from Schizosaccharomyces pombe (strain 972 / ATCC 24843) (Fission yeast).